The chain runs to 73 residues: MPQIDIHPEWYNDSKVYCDGKHIMTIGSTKPELHVDIWSGNHPFFTGSQRIIDTEGRVERFMRKYNVQKTADT.

Belongs to the bacterial ribosomal protein bL31 family. Type A subfamily. As to quaternary structure, part of the 50S ribosomal subunit.

It localises to the plastid. It is found in the chloroplast. Binds the 23S rRNA. In Palmaria palmata (Dulse), this protein is Large ribosomal subunit protein bL31c.